The chain runs to 1220 residues: MSVDGTKTFFNPYIGARKRSLEARNGLSFSTGQNYDEKNNRRDRNSITYVTTIDEFKYIAPKCLDDKDVKQKGTHIGKLKRSPVLYKNGEEYVFLNFEDCEDVWPRRCSIWNNRSFLPADFDPRFSRFHVYDMIETVEFASAAIDRDKNRFLELLRPMGTIVTMMGITECGKRVAVHVYGIKPYFYMRKVDTDTICGSRCPRELAEKLANVVRSSVNEVANAKRFCTPVTRTVSADCFEVDVVQRKDIYYYGTGHDEFYRVKSQSGKFITLLCDNFYPSIIKYEGNIDAITRMVLDNNGFSTFGWYSFKVGNNGEKVQVRAPCHHCTSCDIEINCTVDNLIGYPEDDAWPDYKLLCFDIECKSGGVNECAFPCATNEEDVVIQISCLLYSINTKQLEHALLFALGACDLPQTFKETFQSSYNILPIVLEFDSEFELLLAFMTFIKQYAPEFVTGYNIVNFDWAFIVTKLTTVYNMRLDGYGVVNQKGMFKVWDAGTNRFQKKGKFKATGMITLDMYSIATEKLKLQSYKLDVVAEAALGERKKELSYKEIPSHFAAGPEKRGIIGEYCLQDSLLVGKLFFKYIPHLELSAIAKLAGILLSKAIFDGQQIRVYTCLLRLARSHGFILPEKNKKFAETVSLTCEEDQTEICEHDSPQEPIHNIKQSSLCHSNSGRTIGYQGAKVLDPISGFHVDPVMVFDFASLYPSIIQAHNLCFTTLVHDDTNLSNLRPQDDYLEINVQGKLLRFVKPHIRESLLAILLKDWLAMRKAIRAKIPESCDEIAVLLDKQQAAIKVVCNSVYGFCGVSNGLLPCIDVAATVTTIGRNMLLTVRDYIHKQWGTRDALLREFPNLSNFMRPEDYSVSVIYGDTDSVFIKFKGVDIHGLVTTGDDMAKRVSSDLFPKPIKLECEKTFNKLLLITKKKYMGTIHGGRMLMKGVDIVRKNNCRFINTYAKKLSDLLFLDDTVAKAAATVAEKPPSFWATSPLPEGLNSFGGVLAEAYTRMMINNITEVEDFAMSAELSRPPDAYTNKRIPHLTVYYKLAMRSEQLPVVKDRISYVIAAATPEVVRDSARVAEFRGELDLCHQNSNTSCPGDSVMTNKETYVRHSPRNKLLISDMAEDPKYLLANNIPLNTDYYLSHLLGTLCVTFKALFGNDVKITETVLRRFIPETFTEDCSYTERVSSEMFTTIRSGIGLQVNEEEETRRKLNIAFRILTATPHRY.

It belongs to the DNA polymerase type-B family. As to quaternary structure, forms a complex with the ssDNA-binding protein, the DNA polymerase processivity factor, and the alkaline exonuclease. Interacts with the helicase-primase complex composed of the primase, the helicase and the primase-associated factor; this interaction may coordinate leading and lagging strand DNA synthesis at the replication fork.

Its subcellular location is the host nucleus. The enzyme catalyses DNA(n) + a 2'-deoxyribonucleoside 5'-triphosphate = DNA(n+1) + diphosphate. The catalysed reaction is Endonucleolytic cleavage to 5'-phosphomonoester.. Its function is as follows. Replicates viral genomic DNA. The replication complex is composed of six viral proteins: the DNA polymerase, processivity factor, primase, primase-associated factor, helicase, and ssDNA-binding protein. Additionally, the polymerase contains an intrinsic ribonuclease H (RNase H) activity that specifically degrades RNA/DNA heteroduplexes or duplex DNA substrates in the 5' to 3' direction. Therefore, it can catalyze the excision of the RNA primers that initiate the synthesis of Okazaki fragments at a replication fork during viral DNA replication. This Gallid herpesvirus 2 (strain Chicken/Md5/ATCC VR-987) (GaHV-2) protein is DNA polymerase catalytic subunit (MDV043).